The following is a 251-amino-acid chain: Ribosomal RNA small subunit methyltransferase J (251 aa).

Residues 100-101, 116-117, and D170 contribute to the S-adenosyl-L-methionine site; these read RD and ER.

The protein belongs to the methyltransferase superfamily. RsmJ family.

Its subcellular location is the cytoplasm. It carries out the reaction guanosine(1516) in 16S rRNA + S-adenosyl-L-methionine = N(2)-methylguanosine(1516) in 16S rRNA + S-adenosyl-L-homocysteine + H(+). Its function is as follows. Specifically methylates the guanosine in position 1516 of 16S rRNA. The chain is Ribosomal RNA small subunit methyltransferase J from Actinobacillus pleuropneumoniae serotype 5b (strain L20).